The following is a 335-amino-acid chain: HTH-type transcriptional regulator LacR (335 aa).

One can recognise an HTH lacI-type domain in the interval 1–58 (MRTIKEIALESGYSPATVSRLLNNDPNLSITADTKNKILEIANKLGYWEDHQEKKIKP). The H-T-H motif DNA-binding region spans 4-23 (IKEIALESGYSPATVSRLLN).

The protein operates within carbohydrate metabolism; lactose degradation [regulation]. In terms of biological role, negatively regulates the transcription of the lactose utilization genes lacL and lacM. This chain is HTH-type transcriptional regulator LacR (lacR), found in Lactobacillus helveticus (Lactobacillus suntoryeus).